Here is a 209-residue protein sequence, read N- to C-terminus: Probable E3 ubiquitin-protein ligase NleG7 (209 aa).

Belongs to the NleG E3 ligase family. In terms of processing, two sizes of protein are detected in situ; only the smaller protein is secreted.

It is found in the secreted. The protein resides in the host cytoplasm. It carries out the reaction S-ubiquitinyl-[E2 ubiquitin-conjugating enzyme]-L-cysteine + [acceptor protein]-L-lysine = [E2 ubiquitin-conjugating enzyme]-L-cysteine + N(6)-ubiquitinyl-[acceptor protein]-L-lysine.. Effector proteins function to alter host cell physiology and promote bacterial survival in host tissues. This protein is probably an E3 ubiquitin-protein ligase that interferes with the host's ubiquitination pathway and targets host proteins for proteasomal degradation. Mice infected with a strain of bacteria deleted for this gene were colonized less quickly by bacteria. The sequence is that of Probable E3 ubiquitin-protein ligase NleG7 from Citrobacter rodentium.